The chain runs to 245 residues: Triosephosphate isomerase (245 aa).

9–11 is a substrate binding site; sequence NWK. The active-site Electrophile is the H92. Residue E164 is the Proton acceptor of the active site. Residues G170, S209, and 230-231 each bind substrate; that span reads GG.

It belongs to the triosephosphate isomerase family. In terms of assembly, homodimer.

The protein localises to the cytoplasm. It catalyses the reaction D-glyceraldehyde 3-phosphate = dihydroxyacetone phosphate. It functions in the pathway carbohydrate biosynthesis; gluconeogenesis. The protein operates within carbohydrate degradation; glycolysis; D-glyceraldehyde 3-phosphate from glycerone phosphate: step 1/1. Involved in the gluconeogenesis. Catalyzes stereospecifically the conversion of dihydroxyacetone phosphate (DHAP) to D-glyceraldehyde-3-phosphate (G3P). This is Triosephosphate isomerase from Cupriavidus pinatubonensis (strain JMP 134 / LMG 1197) (Cupriavidus necator (strain JMP 134)).